Here is a 112-residue protein sequence, read N- to C-terminus: Nucleoid-associated protein CA_C0126 (112 aa).

Positions 93 to 102 are enriched in basic and acidic residues; the sequence is EEETSGEMKK. A disordered region spans residues 93–112; that stretch reads EEETSGEMKKLTGGLNIPGL.

It belongs to the YbaB/EbfC family. In terms of assembly, homodimer.

It is found in the cytoplasm. The protein localises to the nucleoid. Functionally, binds to DNA and alters its conformation. May be involved in regulation of gene expression, nucleoid organization and DNA protection. This is Nucleoid-associated protein CA_C0126 from Clostridium acetobutylicum (strain ATCC 824 / DSM 792 / JCM 1419 / IAM 19013 / LMG 5710 / NBRC 13948 / NRRL B-527 / VKM B-1787 / 2291 / W).